We begin with the raw amino-acid sequence, 222 residues long: Large ribosomal subunit protein uL4 (222 aa).

Residues 50 to 72 are disordered; the sequence is TRGRSEVSHSTRKPFRQKGTGNA.

The protein belongs to the universal ribosomal protein uL4 family. In terms of assembly, part of the 50S ribosomal subunit.

In terms of biological role, one of the primary rRNA binding proteins, this protein initially binds near the 5'-end of the 23S rRNA. It is important during the early stages of 50S assembly. It makes multiple contacts with different domains of the 23S rRNA in the assembled 50S subunit and ribosome. Functionally, forms part of the polypeptide exit tunnel. The chain is Large ribosomal subunit protein uL4 from Chlamydia muridarum (strain MoPn / Nigg).